Here is a 260-residue protein sequence, read N- to C-terminus: Exosome complex component Rrp4 (260 aa).

Residues 59–128 (NDVVIGVVIV…SSMKIELALR (70 aa)) enclose the S1 motif domain. Residues 136-194 (RTGQIVEVEPVKVPRVIGHGGSMISMLKKETNCSIFVGQNGRIWIDGKDEDIELLSKAL) enclose the KH domain.

This sequence belongs to the RRP4 family. As to quaternary structure, component of the archaeal exosome complex. Forms a trimer of Rrp4 and/or Csl4 subunits. The trimer associates with a hexameric ring-like arrangement composed of 3 Rrp41-Rrp42 heterodimers.

It is found in the cytoplasm. In terms of biological role, non-catalytic component of the exosome, which is a complex involved in RNA degradation. Increases the RNA binding and the efficiency of RNA degradation. Confers strong poly(A) specificity to the exosome. This Methanosarcina mazei (strain ATCC BAA-159 / DSM 3647 / Goe1 / Go1 / JCM 11833 / OCM 88) (Methanosarcina frisia) protein is Exosome complex component Rrp4.